Reading from the N-terminus, the 103-residue chain is Small ribosomal subunit protein bS6c (103 aa).

The protein belongs to the bacterial ribosomal protein bS6 family.

Its subcellular location is the plastid. The protein localises to the chloroplast. In terms of biological role, binds together with bS18 to 16S ribosomal RNA. This chain is Small ribosomal subunit protein bS6c, found in Gracilaria tenuistipitata var. liui (Red alga).